Consider the following 290-residue polypeptide: 4-hydroxy-tetrahydrodipicolinate synthase (290 aa).

T44 contributes to the pyruvate binding site. The active-site Proton donor/acceptor is the Y132. The active-site Schiff-base intermediate with substrate is the K160. A pyruvate-binding site is contributed by I202.

It belongs to the DapA family. As to quaternary structure, homotetramer; dimer of dimers.

Its subcellular location is the cytoplasm. It catalyses the reaction L-aspartate 4-semialdehyde + pyruvate = (2S,4S)-4-hydroxy-2,3,4,5-tetrahydrodipicolinate + H2O + H(+). It participates in amino-acid biosynthesis; L-lysine biosynthesis via DAP pathway; (S)-tetrahydrodipicolinate from L-aspartate: step 3/4. Functionally, catalyzes the condensation of (S)-aspartate-beta-semialdehyde [(S)-ASA] and pyruvate to 4-hydroxy-tetrahydrodipicolinate (HTPA). This Geotalea uraniireducens (strain Rf4) (Geobacter uraniireducens) protein is 4-hydroxy-tetrahydrodipicolinate synthase.